The primary structure comprises 207 residues: Large ribosomal subunit protein uL4 (207 aa).

Residues 45–89 (RQGTHKVKTRSEVRGGGRKPWRQKGTGRARQGSIRSPQWRGGGTV) are disordered. Residues 60–71 (GGRKPWRQKGTG) show a composition bias toward basic residues.

The protein belongs to the universal ribosomal protein uL4 family. In terms of assembly, part of the 50S ribosomal subunit.

Functionally, one of the primary rRNA binding proteins, this protein initially binds near the 5'-end of the 23S rRNA. It is important during the early stages of 50S assembly. It makes multiple contacts with different domains of the 23S rRNA in the assembled 50S subunit and ribosome. In terms of biological role, forms part of the polypeptide exit tunnel. In Bacillus anthracis (strain A0248), this protein is Large ribosomal subunit protein uL4.